The sequence spans 284 residues: D-tagatose-1,6-bisphosphate aldolase subunit GatY (284 aa).

Asp82 serves as the catalytic Proton donor. Zn(2+)-binding residues include His83 and His180. Dihydroxyacetone phosphate is bound at residue Gly181. His208 contributes to the Zn(2+) binding site. Residues Gly209 to Ser211 and Asn230 to Thr233 contribute to the dihydroxyacetone phosphate site.

It belongs to the class II fructose-bisphosphate aldolase family. TagBP aldolase GatY subfamily. In terms of assembly, forms a complex with GatZ. Requires Zn(2+) as cofactor.

It catalyses the reaction D-tagatofuranose 1,6-bisphosphate = D-glyceraldehyde 3-phosphate + dihydroxyacetone phosphate. The protein operates within carbohydrate metabolism; D-tagatose 6-phosphate degradation; D-glyceraldehyde 3-phosphate and glycerone phosphate from D-tagatose 6-phosphate: step 2/2. Its function is as follows. Catalytic subunit of the tagatose-1,6-bisphosphate aldolase GatYZ, which catalyzes the reversible aldol condensation of dihydroxyacetone phosphate (DHAP or glycerone-phosphate) with glyceraldehyde 3-phosphate (G3P) to produce tagatose 1,6-bisphosphate (TBP). Requires GatZ subunit for full activity and stability. Is involved in the catabolism of galactitol. The protein is D-tagatose-1,6-bisphosphate aldolase subunit GatY of Escherichia coli O45:K1 (strain S88 / ExPEC).